A 366-amino-acid polypeptide reads, in one-letter code: Histidinol-phosphate aminotransferase 2 (366 aa).

A disordered region spans residues 1–21 (MQVKDQLSLLQPYKPGKSPEQ). Residue Lys222 is modified to N6-(pyridoxal phosphate)lysine.

The protein belongs to the class-II pyridoxal-phosphate-dependent aminotransferase family. Histidinol-phosphate aminotransferase subfamily. As to quaternary structure, homodimer. Pyridoxal 5'-phosphate is required as a cofactor.

The catalysed reaction is L-histidinol phosphate + 2-oxoglutarate = 3-(imidazol-4-yl)-2-oxopropyl phosphate + L-glutamate. Its pathway is amino-acid biosynthesis; L-histidine biosynthesis; L-histidine from 5-phospho-alpha-D-ribose 1-diphosphate: step 7/9. The sequence is that of Histidinol-phosphate aminotransferase 2 from Bacillus cereus (strain ZK / E33L).